The primary structure comprises 184 residues: Shikimate kinase (184 aa).

20–25 provides a ligand contact to ATP; the sequence is GVGKSR. Serine 24 provides a ligand contact to Mg(2+). The substrate site is built by aspartate 42, arginine 66, and glycine 88. Position 127 (arginine 127) interacts with ATP. Arginine 146 serves as a coordination point for substrate. An ATP-binding site is contributed by arginine 162.

It belongs to the shikimate kinase family. In terms of assembly, monomer. Mg(2+) is required as a cofactor.

It localises to the cytoplasm. It catalyses the reaction shikimate + ATP = 3-phosphoshikimate + ADP + H(+). The protein operates within metabolic intermediate biosynthesis; chorismate biosynthesis; chorismate from D-erythrose 4-phosphate and phosphoenolpyruvate: step 5/7. Its function is as follows. Catalyzes the specific phosphorylation of the 3-hydroxyl group of shikimic acid using ATP as a cosubstrate. The protein is Shikimate kinase of Thermus thermophilus (strain ATCC BAA-163 / DSM 7039 / HB27).